Here is a 183-residue protein sequence, read N- to C-terminus: ATP synthase subunit delta (183 aa).

Belongs to the ATPase delta chain family. In terms of assembly, F-type ATPases have 2 components, F(1) - the catalytic core - and F(0) - the membrane proton channel. F(1) has five subunits: alpha(3), beta(3), gamma(1), delta(1), epsilon(1). F(0) has three main subunits: a(1), b(2) and c(10-14). The alpha and beta chains form an alternating ring which encloses part of the gamma chain. F(1) is attached to F(0) by a central stalk formed by the gamma and epsilon chains, while a peripheral stalk is formed by the delta and b chains.

It localises to the cell inner membrane. Functionally, f(1)F(0) ATP synthase produces ATP from ADP in the presence of a proton or sodium gradient. F-type ATPases consist of two structural domains, F(1) containing the extramembraneous catalytic core and F(0) containing the membrane proton channel, linked together by a central stalk and a peripheral stalk. During catalysis, ATP synthesis in the catalytic domain of F(1) is coupled via a rotary mechanism of the central stalk subunits to proton translocation. In terms of biological role, this protein is part of the stalk that links CF(0) to CF(1). It either transmits conformational changes from CF(0) to CF(1) or is implicated in proton conduction. This chain is ATP synthase subunit delta, found in Rickettsia typhi (strain ATCC VR-144 / Wilmington).